A 615-amino-acid chain; its full sequence is Putative binding protein BruAb2_0648 (615 aa).

A signal peptide spans 1 to 29 (MLNRFIAFFRSVFLIGLVATAFGALPARA).

Belongs to the bacterial solute-binding protein 5 family.

The protein resides in the periplasm. This Brucella abortus biovar 1 (strain 9-941) protein is Putative binding protein BruAb2_0648.